Consider the following 82-residue polypeptide: Sulfur carrier protein TusA (82 aa).

Cysteine 19 (cysteine persulfide intermediate) is an active-site residue.

It belongs to the sulfur carrier protein TusA family.

The protein resides in the cytoplasm. Functionally, sulfur carrier protein which probably makes part of a sulfur-relay system. The sequence is that of Sulfur carrier protein TusA from Vibrio cholerae serotype O1 (strain ATCC 39541 / Classical Ogawa 395 / O395).